The chain runs to 383 residues: MDDKLMLMIPGPTPVPEAALLALAKHPIGHRTSEFSNMMGEVTQNLKWLHQTESDVLMLNVSGTGAVEAGMINFLSPGDRILVGSNGKFGERWVEVGQAFGLNVEAITAEWGQPLDPDKFAQKLQADTNKEIKAVIITHSETSTGVINDLVAINSHVKEHGQALIIVDAVTSLGAYNVPVDALGLDVVASGSQKGYMIPPGLGFVSVSPKAWEAYKTAKLPKYYLDLGKYRKATAKNTTPFTPPVNLMVALHTTLGMMKKEGLESIFTRHERQKNATRAAMKALNLPLFAADECASPAITAVATPGMEADKIRSLMKKRFDIALAGGQDHLSNKIFRVGHLGFVSDRDILSCIASLEVVLLELGHENFNSGAGVAAAARVFSN.

Lysine 194 is modified (N6-(pyridoxal phosphate)lysine).

Belongs to the class-V pyridoxal-phosphate-dependent aminotransferase family. Heterodimer of a large and a small subunit. It depends on pyridoxal 5'-phosphate as a cofactor.

Its subcellular location is the cytoplasm. In terms of biological role, soluble hydrogenase catalyzes both production and consumption of hydrogen from suitable artificial electron donors or acceptors. This subunit catalyzes the tritium-exchange activity. The chain is Soluble hydrogenase 42 kDa subunit from Anabaena cylindrica.